The sequence spans 208 residues: Uracil phosphoribosyltransferase (208 aa).

5-phospho-alpha-D-ribose 1-diphosphate is bound by residues R77, R102, and 128–136 (DPMLATGGT). Uracil-binding positions include I191 and 196–198 (GDI). D197 provides a ligand contact to 5-phospho-alpha-D-ribose 1-diphosphate.

Belongs to the UPRTase family. The cofactor is Mg(2+).

The enzyme catalyses UMP + diphosphate = 5-phospho-alpha-D-ribose 1-diphosphate + uracil. Its pathway is pyrimidine metabolism; UMP biosynthesis via salvage pathway; UMP from uracil: step 1/1. With respect to regulation, allosterically activated by GTP. Functionally, catalyzes the conversion of uracil and 5-phospho-alpha-D-ribose 1-diphosphate (PRPP) to UMP and diphosphate. The polypeptide is Uracil phosphoribosyltransferase (Aquifex aeolicus (strain VF5)).